We begin with the raw amino-acid sequence, 907 residues long: Protein MEI2-like 4 (907 aa).

Residues 28-58 form a disordered region; it reads QFGFMKNNPMPEGGVDRSSNLPTSSWTSDSY. Polar residues predominate over residues 44–54; sequence RSSNLPTSSWT. RRM domains follow at residues 211-284 and 295-368; these read RILF…YSIP and GALW…PTCP. The interval 856-907 is disordered; it reads AGPNAGDQEPFPMGSNIRSRPGKHRTNSIENYTNFSSSSDNRDEPANGNDSM. Residues 883 to 894 are compositionally biased toward polar residues; sequence SIENYTNFSSSS.

Functionally, probable RNA-binding protein that plays a role in meiosis and vegetative growth. This Arabidopsis thaliana (Mouse-ear cress) protein is Protein MEI2-like 4 (ML4).